A 145-amino-acid polypeptide reads, in one-letter code: Large ribosomal subunit protein uL11 (145 aa).

This sequence belongs to the universal ribosomal protein uL11 family. Part of the ribosomal stalk of the 50S ribosomal subunit. Interacts with L10 and the large rRNA to form the base of the stalk. L10 forms an elongated spine to which L12 dimers bind in a sequential fashion forming a multimeric L10(L12)X complex. One or more lysine residues are methylated.

Forms part of the ribosomal stalk which helps the ribosome interact with GTP-bound translation factors. The protein is Large ribosomal subunit protein uL11 of Rickettsia typhi (strain ATCC VR-144 / Wilmington).